Consider the following 1720-residue polypeptide: Merozoite surface protein 1 (1720 aa).

Residues 1-19 form the signal peptide; it reads MKIIFFLCSFLFFIINTQC. Residues 63–112 show a composition bias toward low complexity; the sequence is ASAQSGASAQSGASAQSGASAQSGASAQSGASAQSGTSGPSGPSGTSPSS. The interval 63–137 is disordered; that stretch reads ASAQSGASAQ…PPADASDSDA (75 aa). The segment covering 113–122 has biased composition (polar residues); it reads RSNTLPRSNT. Residues 123-132 show a composition bias toward low complexity; the sequence is SSGASPPADA. Positions 474–519 form a coiled coil; it reads INNIKKKIDLEEKNINHTKEQNKKLLEDYEKSKKDYEELLEKFYEM. Disordered stretches follow at residues 723–775, 908–955, 1249–1278, and 1470–1491; these read SETT…PPKE, TGTS…SGPA, TPPQPDVTPSPLSVRVSGSSGSTKEETQIP, and KEKFPSSPPTTPPSPAKTDEQK. Positions 743–753 are enriched in acidic residues; that stretch reads EVTEETEETEE. Over residues 908–946 the composition is skewed to low complexity; that stretch reads TGTSSTSSPGNTTVNTAQSATHSNSQNQQSNASSTNTQN. Positions 1264–1278 are enriched in polar residues; the sequence is VSGSSGSTKEETQIP. Residues 1475–1484 show a composition bias toward pro residues; sequence SSPPTTPPSP. EGF-like domains are found at residues 1611–1651 and 1652–1693; these read HQCV…VENP and NPTC…YPLF. Cystine bridges form between Cys-1613-Cys-1624, Cys-1618-Cys-1634, Cys-1636-Cys-1647, Cys-1655-Cys-1668, Cys-1662-Cys-1682, and Cys-1684-Cys-1698. Residue Ser-1699 is the site of GPI-anchor amidated serine attachment. A propeptide spans 1700–1720 (removed in mature form); it reads SSNFLGISFLLILMLILYSFI.

Forms a complex composed of subunits p83, p30, p38, and p42 which remain non-covalently associated; the complex is formed at the merozoite surface prior to egress from host erythrocytes. Forms a complex composed of processed MSP1 subunits, MSP6 subunit p36 and MSP7; the complex is formed at the merozoite surface prior to egress from host erythrocytes. Within the complex, interacts (via subunit p38) with MSP6 subunit p36 and (via subunits p83, p30 and p38) with MSP7 (via subunit p22). Forms a complex composed of MSP1, MSP6, DBLMSP1 and DBLMSP2. Within the complex, interacts (via subunit p38) with DBLMSP1 and DBLMSP2. Forms a complex composed of MSP1, and rhoptry proteins RhopH3, RAP1 and CLAG9/RhopH3. Within the complex, interacts (via subunits p42 and p19) with RhopH3 (via C-terminus). Forms a complex composed of MSP1, MSP6, MSP7, MSP9 and MSP3; within the complex, MSP6 and MSP9 mediate the binding to the host erythrocyte. Interacts (via subunits p19 and p42) with MSP9; the interaction is direct; MSP1 subunits p19 or p42, and MSP9 form a co-ligand complex that interacts with host SLC4A1/Band 3 protein. May interact with PFD6. Interacts with host spectrin. In terms of assembly, interacts with host glycophorin GYPA in a sialic acid-independent manner. As to quaternary structure, interacts with host proinflammatory cytokine S100P; the interaction blocks S100P inflammatory and chemotactic activities. Interacts with host SLC4A1/Band 3 (via 5ABC region) on the host erythrocyte surface in a sialic acid-independent manner. In terms of processing, the p190 precursor is cleaved by SUB1 prior to merozoite egress into 4 subunits p83, p30, p38, and p42 which remain non-covalently associated. SUB1-mediated proteolytic cleavage occurs in an orderly manner; the first cleavage occurs at the p30/p38 site, followed by cleavage at the p83/p30 site, in the 3D7 strain a second cleavage occurs at the N-terminus of p83, the last cleavage occurs at the p38/p42 site. The order of cleavage is essential for parasite viability. SUB1-mediated processing is essential for merozoite egress. In a second processing step during erythrocyte invasion, p42 is cleaved by SUB2 into p33 and p19; the latter remains attached to the merozoite surface via its GPI-anchor and is endocytosed during the subsequent ring stage.

The protein localises to the cell membrane. It is found in the secreted. The protein resides in the vacuole membrane. During the asexual blood stage, involved in merozoite egress from host erythrocytes possibly via its interaction with the host cytoskeleton protein spectrin resulting in the destabilization of the host cytoskeleton and thus leading to erythrocyte cell membrane rupture. Involved in the binding to host erythrocytes and is required for host erythrocyte invasion. Functionally, by binding to host proinflammatory cytokine S100P may interfere with host immune responses. Its function is as follows. Involved in merozoite invasion of host erythrocytes. May play a role in the biogenesis and/or function of the food vacuole during the intraerythrocytic development. The polypeptide is Merozoite surface protein 1 (Plasmodium falciparum (isolate 3D7)).